Here is a 232-residue protein sequence, read N- to C-terminus: MPILRNDWNDVIGGEFQKTYYLELREFLKREYKEQTVYPHMNDLFNAFHYTPFEQVKVVILGQDPYHGPNQAHGLSFSVKPEVAVPPSLKNMYKELQDDLGVTPVDHGYLQPWADQGVLLLNTVLSVRKRQPGSHKGKGWELFTNEVIHALNKREEPVAFVLWGRHAQAKKEAIDATRHLIIESAHPSPFSANRGFFGSRPFSKINHWLQEQGKAPVDWQLPMKAELYSYGK.

The active-site Proton acceptor is the D64.

The protein belongs to the uracil-DNA glycosylase (UDG) superfamily. UNG family.

It localises to the cytoplasm. The enzyme catalyses Hydrolyzes single-stranded DNA or mismatched double-stranded DNA and polynucleotides, releasing free uracil.. In terms of biological role, excises uracil residues from the DNA which can arise as a result of misincorporation of dUMP residues by DNA polymerase or due to deamination of cytosine. The sequence is that of Uracil-DNA glycosylase from Shouchella clausii (strain KSM-K16) (Alkalihalobacillus clausii).